We begin with the raw amino-acid sequence, 210 residues long: Neurotrophin-4 (210 aa).

An N-terminal signal peptide occupies residues 1–24; sequence MLPLPSCSLPILLLFLLPSVPIES. A propeptide spanning residues 25 to 80 is cleaved from the precursor; it reads QPPPSTLPPFLAPEWDLLSPRVVLSRGAPAGPPLLFLLEAGAFRESAGAPANRSRR. Residue asparagine 76 is glycosylated (N-linked (GlcNAc...) asparagine). Intrachain disulfides connect cysteine 97/cysteine 170, cysteine 141/cysteine 199, and cysteine 158/cysteine 201.

This sequence belongs to the NGF-beta family. In terms of tissue distribution, highest levels in prostate, lower levels in thymus, placenta, and skeletal muscle. Expressed in embryonic and adult tissues.

It is found in the secreted. Its function is as follows. Target-derived survival factor for peripheral sensory sympathetic neurons. May promote ameloblast differentiation and subsequent reduction in proliferation of ameloblasts. This is Neurotrophin-4 (NTF4) from Homo sapiens (Human).